A 96-amino-acid polypeptide reads, in one-letter code: Small ribosomal subunit protein bS6 (96 aa).

Belongs to the bacterial ribosomal protein bS6 family.

Binds together with bS18 to 16S ribosomal RNA. The chain is Small ribosomal subunit protein bS6 from Cutibacterium acnes (strain DSM 16379 / KPA171202) (Propionibacterium acnes).